The primary structure comprises 85 residues: Serine protease inhibitor Cvsi-2 (85 aa).

The signal sequence occupies residues 1-18 (MKVAVVVALLCFVCYTAA).

Contains 6 disulfide bonds. In terms of tissue distribution, detected in hemolymph (at protein level). Within the digestive gland expression is limited to the basophil cells of the digestive diverticula.

It is found in the secreted. Functionally, slow-binding inhibitor of serine proteases. The inhibitor rapidly binds to the protease forming a weak enzyme-inhibitor complex, and this is followed by a slow isomerization forming a tight-binding enzyme-inhibitor complex. Active against subtilisin A with a dissociation constant of 0.18 nM. Active against perkinsin. Not active against thermolysin, papain or pepsin. The protein is Serine protease inhibitor Cvsi-2 of Crassostrea virginica (Eastern oyster).